The sequence spans 335 residues: Trans-3-hydroxy-L-proline dehydratase (335 aa).

Cys91 serves as the catalytic Proton acceptor. Residues 92–93 and 256–257 each bind substrate; these read GH and GS.

It belongs to the proline racemase family. As to quaternary structure, homodimer.

It catalyses the reaction trans-3-hydroxy-L-proline = 1-pyrroline-2-carboxylate + H2O. It participates in amino-acid degradation. Its function is as follows. Catalyzes the dehydration of trans-3-hydroxy-L-proline (t3LHyp) to Delta(1)-pyrroline-2-carboxylate (Pyr2C). Together with LhpI, is involved in a t3LHyp degradation pathway to L-proline, which allows A.brasilense to grow on t3LHyp as a sole carbon source. In Azospirillum brasilense, this protein is Trans-3-hydroxy-L-proline dehydratase.